The following is a 228-amino-acid chain: Phosphatidylserine decarboxylase proenzyme (228 aa).

The active-site Schiff-base intermediate with substrate; via pyruvic acid is Ser197. Ser197 is modified (pyruvic acid (Ser); by autocatalysis).

Belongs to the phosphatidylserine decarboxylase family. PSD-A subfamily. As to quaternary structure, heterodimer of a large membrane-associated beta subunit and a small pyruvoyl-containing alpha subunit. The cofactor is pyruvate. Post-translationally, is synthesized initially as an inactive proenzyme. Formation of the active enzyme involves a self-maturation process in which the active site pyruvoyl group is generated from an internal serine residue via an autocatalytic post-translational modification. Two non-identical subunits are generated from the proenzyme in this reaction, and the pyruvate is formed at the N-terminus of the alpha chain, which is derived from the carboxyl end of the proenzyme. The post-translation cleavage follows an unusual pathway, termed non-hydrolytic serinolysis, in which the side chain hydroxyl group of the serine supplies its oxygen atom to form the C-terminus of the beta chain, while the remainder of the serine residue undergoes an oxidative deamination to produce ammonia and the pyruvoyl prosthetic group on the alpha chain.

Its subcellular location is the cell membrane. The catalysed reaction is a 1,2-diacyl-sn-glycero-3-phospho-L-serine + H(+) = a 1,2-diacyl-sn-glycero-3-phosphoethanolamine + CO2. It participates in phospholipid metabolism; phosphatidylethanolamine biosynthesis; phosphatidylethanolamine from CDP-diacylglycerol: step 2/2. Its function is as follows. Catalyzes the formation of phosphatidylethanolamine (PtdEtn) from phosphatidylserine (PtdSer). The sequence is that of Phosphatidylserine decarboxylase proenzyme from Bacteroides thetaiotaomicron (strain ATCC 29148 / DSM 2079 / JCM 5827 / CCUG 10774 / NCTC 10582 / VPI-5482 / E50).